The sequence spans 134 residues: Large-conductance mechanosensitive channel (134 aa).

2 helical membrane passes run 10-30 and 76-96; these read FAMR…GAFG and GAFL…FVVI.

The protein belongs to the MscL family. In terms of assembly, homopentamer.

It is found in the cell inner membrane. Functionally, channel that opens in response to stretch forces in the membrane lipid bilayer. May participate in the regulation of osmotic pressure changes within the cell. This Prosthecochloris aestuarii (strain DSM 271 / SK 413) protein is Large-conductance mechanosensitive channel.